The sequence spans 299 residues: ATP phosphoribosyltransferase (299 aa).

The protein belongs to the ATP phosphoribosyltransferase family. Long subfamily. Equilibrium between an active dimeric form, an inactive hexameric form and higher aggregates. Interconversion between the various forms is largely reversible and is influenced by the natural substrates and inhibitors of the enzyme. It depends on Mg(2+) as a cofactor.

It localises to the cytoplasm. The enzyme catalyses 1-(5-phospho-beta-D-ribosyl)-ATP + diphosphate = 5-phospho-alpha-D-ribose 1-diphosphate + ATP. It participates in amino-acid biosynthesis; L-histidine biosynthesis; L-histidine from 5-phospho-alpha-D-ribose 1-diphosphate: step 1/9. Its activity is regulated as follows. Feedback inhibited by histidine. Its function is as follows. Catalyzes the condensation of ATP and 5-phosphoribose 1-diphosphate to form N'-(5'-phosphoribosyl)-ATP (PR-ATP). Has a crucial role in the pathway because the rate of histidine biosynthesis seems to be controlled primarily by regulation of HisG enzymatic activity. The sequence is that of ATP phosphoribosyltransferase from Escherichia coli O7:K1 (strain IAI39 / ExPEC).